Consider the following 29-residue polypeptide: Cytolysin Oshem 1 (29 aa).

Its subcellular location is the secreted. The protein localises to the nematocyst. It localises to the target cell membrane. In terms of biological role, cytolysin that shows moderate hemolysis and moderate myonecrosis. The polypeptide is Cytolysin Oshem 1 (Olindias sambaquiensis (Hydromedusa)).